A 364-amino-acid chain; its full sequence is DNA replication and repair protein RecF (364 aa).

30–37 lines the ATP pocket; sequence GNNAQGKT.

The protein belongs to the RecF family.

Its subcellular location is the cytoplasm. Functionally, the RecF protein is involved in DNA metabolism; it is required for DNA replication and normal SOS inducibility. RecF binds preferentially to single-stranded, linear DNA. It also seems to bind ATP. This Clostridium botulinum (strain Langeland / NCTC 10281 / Type F) protein is DNA replication and repair protein RecF.